The chain runs to 86 residues: Small ribosomal subunit protein bS20 (86 aa).

Over residues 1–27 (MANSKSAKKRATQAERRRQHNASRRSM) the composition is skewed to basic residues. Residues 1–28 (MANSKSAKKRATQAERRRQHNASRRSMM) are disordered.

It belongs to the bacterial ribosomal protein bS20 family.

Functionally, binds directly to 16S ribosomal RNA. This chain is Small ribosomal subunit protein bS20, found in Aliivibrio fischeri (strain MJ11) (Vibrio fischeri).